We begin with the raw amino-acid sequence, 642 residues long: MDKKKDLLENEQFLRIQKLNAADAGKRQSITVDDEGELYGLDTSGNSPANEHTATTITQNHSVVASNGDVAFIPGTATEGNTEIVTEEVIETDDNMFKTHVKTLSSKEKARYRQGSSNFISYFDDMSFEHRPSILDGSVNEPFKTKFVGPTLEKEIRRREKELMAMRKNLHHRKSSPDAVDSVGKNDGAAPTTVPTAATSETVVTVETTIISSNFSGLYVAFWMAIAFGAVKALIDYYYQHNGSFKDSEILKFMTTNLFTVASVDLLMYLSTYFVVGIQYLCKWGVLKWGTTGWIFTSIYEFLFVIFYMYLTENILKLHWLSKIFLFLHSLVLLMKMHSFAFYNGYLWGIKEELQFSKSALAKYKDSINDPKVIGALEKSCEFCSFELSSQSLSDQTQKFPNNISAKSFFWFTMFPTLIYQIEYPRTKEIRWSYVLEKICAIFGTIFLMMIDAQILMYPVAMRALAVRNSEWTGILDRLLKWVGLLVDIVPGFIVMYILDFYLIWDAILNCVAELTRFGDRYFYGDWWNCVSWADFSRIWNIPVHKFLLRHVYHSSMSSFKLNKSQATLMTFFLSSVVHELAMYVIFKKLRFYLFFFQMLQMPLVALTNTKFMRNRTIIGNVIFWLGICMGPSVMCTLYLTF.

A disordered region spans residues 174-194; sequence KSSPDAVDSVGKNDGAAPTTV. Phosphoserine occurs at positions 175 and 176. 5 helical membrane-spanning segments follow: residues 215–235, 292–312, 404–424, 442–462, and 485–505; these read FSGL…KALI, TGWI…MYLT, ISAK…QIEY, IFGT…PVAM, and LLVD…YLIW. Positions 523-529 match the FYXDWWN motif motif; it reads FYGDWWN. Helical transmembrane passes span 567–587 and 622–642; these read ATLM…YVIF and VIFW…YLTF. His-579 is an active-site residue.

This sequence belongs to the membrane-bound acyltransferase family. Sterol o-acyltransferase subfamily.

It localises to the endoplasmic reticulum membrane. It carries out the reaction ergosterol + an acyl-CoA = ergosteryl ester + CoA. The enzyme catalyses zymosterol + an acyl-CoA = zymosterol ester + CoA. Its function is as follows. Sterol O-acyltransferase that catalyzes the formation of stery esters. This Saccharomyces cerevisiae (strain ATCC 204508 / S288c) (Baker's yeast) protein is Sterol O-acyltransferase 2.